A 313-amino-acid polypeptide reads, in one-letter code: Porphobilinogen deaminase (313 aa).

The residue at position 242 (Cys-242) is an S-(dipyrrolylmethanemethyl)cysteine.

The protein belongs to the HMBS family. Monomer. Dipyrromethane serves as cofactor.

It carries out the reaction 4 porphobilinogen + H2O = hydroxymethylbilane + 4 NH4(+). Its pathway is porphyrin-containing compound metabolism; protoporphyrin-IX biosynthesis; coproporphyrinogen-III from 5-aminolevulinate: step 2/4. In terms of biological role, tetrapolymerization of the monopyrrole PBG into the hydroxymethylbilane pre-uroporphyrinogen in several discrete steps. The protein is Porphobilinogen deaminase of Enterobacter sp. (strain 638).